The chain runs to 224 residues: PKHD-type hydroxylase CYB_2270 (224 aa).

The Fe2OG dioxygenase domain maps to 78–176 (LIHSILISCY…RYAAVSWVQS (99 aa)). The Fe cation site is built by histidine 96, aspartate 98, and histidine 157. Arginine 167 contacts 2-oxoglutarate.

It depends on Fe(2+) as a cofactor. L-ascorbate is required as a cofactor.

This Synechococcus sp. (strain JA-2-3B'a(2-13)) (Cyanobacteria bacterium Yellowstone B-Prime) protein is PKHD-type hydroxylase CYB_2270.